The chain runs to 2460 residues: Reducing polyketide synthase BOA6 (2460 aa).

The Ketosynthase family 3 (KS3) domain maps to 5–438 (NEPIAVIGTG…GTNAHAILES (434 aa)). Residues Cys-178, His-317, and His-360 each act as for beta-ketoacyl synthase activity in the active site. Residues 549–864 (VFTGQGAQWP…PYTGVLSRGD (316 aa)) are malonyl-CoA:ACP transacylase (MAT) domain. Residues 938–1073 (HELLGVRCAD…GRIKMTLGTP (136 aa)) form an N-terminal hotdog fold region. Residues 938–1244 (HELLGVRCAD…QMQSFTAARP (307 aa)) form a dehydratase (DH) domain region. The PKS/mFAS DH domain maps to 938–1245 (HELLGVRCAD…MQSFTAARPS (308 aa)). Catalysis depends on His-970, which acts as the Proton acceptor; for dehydratase activity. The segment at 1088-1245 (LGPLNVDRFY…MQSFTAARPS (158 aa)) is C-terminal hotdog fold. The active-site Proton donor; for dehydratase activity is Asp-1145. A methyltransferase (MT) domain region spans residues 1399–1586 (NKFVTAAMKK…VNDFKDKSRY (188 aa)). Positions 2098–2266 (SYLLAGLTGD…KRGGVASVIH (169 aa)) are ketoreductase (KR) domain. A Carrier domain is found at 2378–2456 (DEVLGVMQKC…DLCELACEEY (79 aa)). Position 2416 is an O-(pantetheine 4'-phosphoryl)serine (Ser-2416).

It participates in polyketide biosynthesis. Functionally, reducing polyketide synthase; part of the gene cluster A that mediates the biosynthesis of botcinic acid and its botcinin derivatives, acetate-derived polyketides that contribute to virulence when combined with the sesquiterpene botrydial. Botcinic acid and its derivatives have been shown to induce chlorosis and necrosis during host plant infection, but also have antifungal activities. Two polyketide synthases, BOA6 and BOA9, are involved in the biosynthesis of botcinins. BOA6 mediates the formation of the per-methylated tetraketide core by condensation of four units of malonyl-CoA with one unit of acetyl-CoA, which would be methylated in activated methylene groups to yield a bicyclic acid intermediate that could then either be converted to botrylactone derivatives or lose the starter acetate unit through a retro-Claisen type C-C bond cleavage to yield botcinin derivatives. The second polyketide synthase, BOA9, is probably required for the biosynthesis of the tetraketide side chain of botcinins. The methyltransferase (MT) domain within BOA6 is probably responsible for the incorporation of four methyl groups. The trans-enoyl reductase BOA5 might take over the enoyl reductase function of BOA6 that misses an ER domain. The monooxygenases BOA2, BOA3 and BOA4 might be involved in further hydroxylations at C4, C5 and C8, whereas BOA7, close to BOA9, could potentially be involved in the hydroxylation at C4 in the side chain of botcinins. This is Reducing polyketide synthase BOA6 from Botryotinia fuckeliana (strain B05.10) (Noble rot fungus).